Reading from the N-terminus, the 349-residue chain is Delta(7)-sterol 5(6)-desaturase ERG3A (349 aa).

The next 3 helical transmembrane spans lie at 84-104, 124-144, and 162-182; these read ITWI…YIFI, IIAA…FFLL, and LWYD…CIYW. The 127-residue stretch at 170 to 296 folds into the Fatty acid hydroxylase domain; it reads PLFLLFTDFC…FTAFDRMGGT (127 aa). The Histidine box-1 motif lies at 184 to 188; that stretch reads HRWLH. The short motif at 197–201 is the Histidine box-2 element; it reads HKLHH. Residues 227 to 247 form a helical membrane-spanning segment; the sequence is HIFPFIFPLQKMAYVALFVFV. The Histidine box-3 signature appears at 272–276; that stretch reads HSLHH.

The protein belongs to the sterol desaturase family.

Its subcellular location is the endoplasmic reticulum membrane. It carries out the reaction episterol + 2 Fe(II)-[cytochrome b5] + O2 + 2 H(+) = 5-dehydroepisterol + 2 Fe(III)-[cytochrome b5] + 2 H2O. Its pathway is steroid metabolism; ergosterol biosynthesis. In terms of biological role, C-5 sterol desaturase; part of the third module of ergosterol biosynthesis pathway that includes the late steps of the pathway. ERG3A and ERG3BB catalyze the introduction of a C-5 double bond in the B ring to produce 5-dehydroepisterol. The third module or late pathway involves the ergosterol synthesis itself through consecutive reactions that mainly occur in the endoplasmic reticulum (ER) membrane. Firstly, the squalene synthase ERG9 catalyzes the condensation of 2 farnesyl pyrophosphate moieties to form squalene, which is the precursor of all steroids. Squalene synthase is crucial for balancing the incorporation of farnesyl diphosphate (FPP) into sterol and nonsterol isoprene synthesis. Secondly, squalene is converted into lanosterol by the consecutive action of the squalene epoxidase ERG1 and the lanosterol synthase ERG7. Then, the delta(24)-sterol C-methyltransferase ERG6 methylates lanosterol at C-24 to produce eburicol. Eburicol is the substrate of the sterol 14-alpha demethylase encoded by CYP51A, CYP51B and CYP51C, to yield 4,4,24-trimethyl ergosta-8,14,24(28)-trienol. CYP51B encodes the enzyme primarily responsible for sterol 14-alpha-demethylation, and plays an essential role in ascospore formation. CYP51A encodes an additional sterol 14-alpha-demethylase, induced on ergosterol depletion and responsible for the intrinsic variation in azole sensitivity. The third CYP51 isoform, CYP51C, does not encode a sterol 14-alpha-demethylase, but is required for full virulence on host wheat ears. The C-14 reductase ERG24 then reduces the C14=C15 double bond which leads to 4,4-dimethylfecosterol. A sequence of further demethylations at C-4, involving the C-4 demethylation complex containing the C-4 methylsterol oxidases ERG25, the sterol-4-alpha-carboxylate 3-dehydrogenase ERG26 and the 3-keto-steroid reductase ERG27, leads to the production of fecosterol via 4-methylfecosterol. ERG28 has a role as a scaffold to help anchor ERG25, ERG26 and ERG27 to the endoplasmic reticulum. The C-8 sterol isomerase ERG2 then catalyzes the reaction which results in unsaturation at C-7 in the B ring of sterols and thus converts fecosterol to episterol. The sterol-C5-desaturases ERG3A and ERG3BB then catalyze the introduction of a C-5 double bond in the B ring to produce 5-dehydroepisterol. The C-22 sterol desaturases ERG5A and ERG5B further convert 5-dehydroepisterol into ergosta-5,7,22,24(28)-tetraen-3beta-ol by forming the C-22(23) double bond in the sterol side chain. Finally, ergosta-5,7,22,24(28)-tetraen-3beta-ol is substrate of the C-24(28) sterol reductase ERG4 to produce ergosterol. The sequence is that of Delta(7)-sterol 5(6)-desaturase ERG3A from Gibberella zeae (strain ATCC MYA-4620 / CBS 123657 / FGSC 9075 / NRRL 31084 / PH-1) (Wheat head blight fungus).